Here is a 513-residue protein sequence, read N- to C-terminus: Xylose import ATP-binding protein XylG (513 aa).

ABC transporter domains lie at 5–242 (LEMK…VERE) and 259–505 (LRIE…LRSE). 37-44 (GENGSGKS) contributes to the ATP binding site.

It belongs to the ABC transporter superfamily. Xylose importer (TC 3.A.1.2.4) family. As to quaternary structure, the complex is composed of two ATP-binding proteins (XylG), two transmembrane proteins (XylH) and a solute-binding protein (XylF).

It is found in the cell inner membrane. The enzyme catalyses D-xylose(out) + ATP + H2O = D-xylose(in) + ADP + phosphate + H(+). Part of the ABC transporter complex XylFGH involved in xylose import. Responsible for energy coupling to the transport system. The sequence is that of Xylose import ATP-binding protein XylG from Shigella flexneri.